A 458-amino-acid polypeptide reads, in one-letter code: Argininosuccinate lyase (458 aa).

This sequence belongs to the lyase 1 family. Argininosuccinate lyase subfamily.

It is found in the cytoplasm. It catalyses the reaction 2-(N(omega)-L-arginino)succinate = fumarate + L-arginine. It functions in the pathway amino-acid biosynthesis; L-arginine biosynthesis; L-arginine from L-ornithine and carbamoyl phosphate: step 3/3. The protein is Argininosuccinate lyase of Lachnospira eligens (strain ATCC 27750 / DSM 3376 / VPI C15-48 / C15-B4) (Eubacterium eligens).